A 24-amino-acid polypeptide reads, in one-letter code: Grammistin Pp 4b (24 aa).

Exists as aggregates of 3-4 molecules. Expressed by the skin glands.

It is found in the secreted. Thanks to its abundant amphiphilic alpha-helices, it may integrate into membrane phospholipids, leading to lysis of the membrane. Its hemolytic activity is inhibited by phospholipids, but not by cholesterol. Has antibacterial activity with a broad spectrum against various species of bacteria including both Gram-positive and Gram-negative groups. Also has ichthyotoxic activity. The sequence is that of Grammistin Pp 4b from Pogonoperca punctata (Clown grouper).